A 435-amino-acid chain; its full sequence is Methionine aminopeptidase 2 (435 aa).

A disordered region spans residues 57-77 (AIDGDQAAAKKKKSKKKKKKA). Residues 65–77 (AKKKKSKKKKKKA) are compositionally biased toward basic residues. Residue His188 participates in substrate binding. A divalent metal cation contacts are provided by Asp208, Asp219, and His288. His296 serves as a coordination point for substrate. The a divalent metal cation site is built by Glu321 and Glu416.

This sequence belongs to the peptidase M24A family. Methionine aminopeptidase eukaryotic type 2 subfamily. Co(2+) is required as a cofactor. It depends on Zn(2+) as a cofactor. Requires Mn(2+) as cofactor. Fe(2+) serves as cofactor.

The protein resides in the cytoplasm. The enzyme catalyses Release of N-terminal amino acids, preferentially methionine, from peptides and arylamides.. Its function is as follows. Cotranslationally removes the N-terminal methionine from nascent proteins. The N-terminal methionine is often cleaved when the second residue in the primary sequence is small and uncharged (Met-Ala-, Cys, Gly, Pro, Ser, Thr, or Val). The polypeptide is Methionine aminopeptidase 2 (Clavispora lusitaniae (strain ATCC 42720) (Yeast)).